The chain runs to 366 residues: Ribosomal RNA large subunit methyltransferase M (366 aa).

S-adenosyl-L-methionine contacts are provided by residues Ser188, 221–224, Asp240, Asp260, and Asp277; that span reads CPGG. The active-site Proton acceptor is the Lys306.

It belongs to the class I-like SAM-binding methyltransferase superfamily. RNA methyltransferase RlmE family. RlmM subfamily. As to quaternary structure, monomer.

Its subcellular location is the cytoplasm. It carries out the reaction cytidine(2498) in 23S rRNA + S-adenosyl-L-methionine = 2'-O-methylcytidine(2498) in 23S rRNA + S-adenosyl-L-homocysteine + H(+). Its function is as follows. Catalyzes the 2'-O-methylation at nucleotide C2498 in 23S rRNA. The polypeptide is Ribosomal RNA large subunit methyltransferase M (Photorhabdus asymbiotica subsp. asymbiotica (strain ATCC 43949 / 3105-77) (Xenorhabdus luminescens (strain 2))).